The primary structure comprises 323 residues: uncharacterized protein (323 aa).

The next 2 helical transmembrane spans lie at 232–252 (LASY…FIVL) and 267–287 (SLIV…GVIG).

Belongs to the glycosyltransferase 2 family. GtrB subfamily.

The protein resides in the cell membrane. This is an uncharacterized protein from Bacillus subtilis (strain 168).